The primary structure comprises 413 residues: Terephthalate 1,2-dioxygenase, terminal oxygenase component subunit alpha 2 (413 aa).

Residues 41 to 144 form the Rieske domain; it reads NYLCLESEIP…CKEEHGPRKL (104 aa). [2Fe-2S] cluster-binding residues include Cys-82, His-84, Cys-102, and His-105.

It belongs to the bacterial ring-hydroxylating dioxygenase alpha subunit family. Heterotetramer composed of 2 alpha (TphA2I and TphA2II) and 2 beta (TphA3I and TphA3II) subunits. Part of a multicomponent enzyme system composed of a reductase (TphA1I or TphA1II) and a two-subunit oxygenase component (TphA2I or TphA2II and TphA3I or TphA3II). It depends on Fe cation as a cofactor. Requires [2Fe-2S] cluster as cofactor.

It carries out the reaction terephthalate + NADH + O2 + H(+) = (3S,4R)-3,4-dihydroxycyclohexa-1,5-diene-1,4-dicarboxylate + NAD(+). With respect to regulation, inhibited by EDTA. Component of the terephthalate 1,2-dioxygenase multicomponent enzyme system which catalyzes the dioxygenation of terephthalate (TER/TPA) to 1,2-dihydroxy-3,5-cyclohexadiene-1,4-dicarboxylic acid (DCD). It can also use 2,5-dicarboxypyridine (PDC) and 1,4-napthalenedicarboxylic acid (NDC) as substrates, and preferentially uses NADPH which is the physiological electron donor. The protein is Terephthalate 1,2-dioxygenase, terminal oxygenase component subunit alpha 2 (tphA2II) of Comamonas sp.